The sequence spans 675 residues: L-type lectin-domain containing receptor kinase IV.1 (675 aa).

Residues Met1–Ser22 form the signal peptide. Residues Gln23–Lys291 lie on the Extracellular side of the membrane. A legume-lectin like region spans residues Leu25 to Phe261. Asn57, Asn79, Asn112, Asn134, Asn153, and Asn186 each carry an N-linked (GlcNAc...) asparagine glycan. Residues Ile292–Ile312 traverse the membrane as a helical segment. The Cytoplasmic segment spans residues Val313 to Arg675. Positions Phe347–Leu624 constitute a Protein kinase domain. ATP contacts are provided by residues Leu353–Val361 and Lys376. Asp472 serves as the catalytic Proton acceptor.

The protein in the C-terminal section; belongs to the protein kinase superfamily. Ser/Thr protein kinase family. This sequence in the N-terminal section; belongs to the leguminous lectin family.

It is found in the membrane. The enzyme catalyses L-seryl-[protein] + ATP = O-phospho-L-seryl-[protein] + ADP + H(+). The catalysed reaction is L-threonyl-[protein] + ATP = O-phospho-L-threonyl-[protein] + ADP + H(+). The sequence is that of L-type lectin-domain containing receptor kinase IV.1 (LECRK41) from Arabidopsis thaliana (Mouse-ear cress).